The primary structure comprises 451 residues: tRNA modification GTPase MnmE (451 aa).

(6S)-5-formyl-5,6,7,8-tetrahydrofolate is bound by residues R23, E80, and K119. Positions 215-372 (GIKVVLAGQP…LRAALLKTAG (158 aa)) constitute a TrmE-type G domain. Residue N225 participates in K(+) binding. Residues 225 to 230 (NVGKSS), 244 to 250 (TDIPGTT), and 269 to 272 (DTAG) each bind GTP. S229 contributes to the Mg(2+) binding site. The K(+) site is built by T244, I246, and T249. T250 contacts Mg(2+). K451 serves as a coordination point for (6S)-5-formyl-5,6,7,8-tetrahydrofolate.

This sequence belongs to the TRAFAC class TrmE-Era-EngA-EngB-Septin-like GTPase superfamily. TrmE GTPase family. In terms of assembly, homodimer. Heterotetramer of two MnmE and two MnmG subunits. The cofactor is K(+).

It is found in the cytoplasm. Functionally, exhibits a very high intrinsic GTPase hydrolysis rate. Involved in the addition of a carboxymethylaminomethyl (cmnm) group at the wobble position (U34) of certain tRNAs, forming tRNA-cmnm(5)s(2)U34. The sequence is that of tRNA modification GTPase MnmE from Nitrosomonas europaea (strain ATCC 19718 / CIP 103999 / KCTC 2705 / NBRC 14298).